A 174-amino-acid polypeptide reads, in one-letter code: UPF0113 protein AF_0058 (174 aa).

One can recognise a PUA domain in the interval 87–161; it reads RNRVWVNERG…KVFVENLVDR (75 aa).

It belongs to the UPF0113 family.

In Archaeoglobus fulgidus (strain ATCC 49558 / DSM 4304 / JCM 9628 / NBRC 100126 / VC-16), this protein is UPF0113 protein AF_0058.